Consider the following 323-residue polypeptide: Cysteine synthase A (323 aa).

Hydrogen sulfide-binding residues include Asn8 and Arg35. Lys42 is modified (N6-(pyridoxal phosphate)lysine). Residues Asn72 and 177–181 (GTGGT) each bind pyridoxal 5'-phosphate. Leu269 lines the hydrogen sulfide pocket. Pyridoxal 5'-phosphate is bound at residue Ser273.

The protein belongs to the cysteine synthase/cystathionine beta-synthase family. As to quaternary structure, homodimer. The cofactor is pyridoxal 5'-phosphate.

It catalyses the reaction O-acetyl-L-serine + hydrogen sulfide = L-cysteine + acetate. The protein operates within amino-acid biosynthesis; L-cysteine biosynthesis; L-cysteine from L-serine: step 2/2. This is Cysteine synthase A (cysK) from Escherichia coli O157:H7.